Here is a 161-residue protein sequence, read N- to C-terminus: Cytochrome c-type biogenesis protein CcmE (161 aa).

Residues 1-8 are Cytoplasmic-facing; sequence MNARRKKR. Residues 9–29 traverse the membrane as a helical; Signal-anchor for type II membrane protein segment; sequence LALATALIGGVAAIASLLLYA. The Periplasmic segment spans residues 30–161; sequence LNSNLNLFYT…DYNAEQKSGY (132 aa). Residues H131 and Y135 each coordinate heme.

The protein belongs to the CcmE/CycJ family.

Its subcellular location is the cell inner membrane. Functionally, heme chaperone required for the biogenesis of c-type cytochromes. Transiently binds heme delivered by CcmC and transfers the heme to apo-cytochromes in a process facilitated by CcmF and CcmH. The protein is Cytochrome c-type biogenesis protein CcmE of Shewanella woodyi (strain ATCC 51908 / MS32).